The primary structure comprises 861 residues: DNA mismatch repair protein MutS (861 aa).

616–623 (GPNMGGKS) is an ATP binding site.

Belongs to the DNA mismatch repair MutS family.

This protein is involved in the repair of mismatches in DNA. It is possible that it carries out the mismatch recognition step. This protein has a weak ATPase activity. The sequence is that of DNA mismatch repair protein MutS from Haemophilus influenzae (strain 86-028NP).